A 692-amino-acid polypeptide reads, in one-letter code: Aspartate--tRNA ligase, mitochondrial (692 aa).

Residues 1–61 (MNRVILKDSK…RNFTNTINNN (61 aa)) constitute a mitochondrion transit peptide. Residue glutamate 264 coordinates L-aspartate. An aspartate region spans residues 287–290 (QQYK). Arginine 309 serves as a coordination point for L-aspartate. ATP-binding positions include 309 to 311 (RDE) and glutamate 590. Arginine 597 contributes to the L-aspartate binding site. 642 to 645 (GFDR) serves as a coordination point for ATP.

Belongs to the class-II aminoacyl-tRNA synthetase family. Type 1 subfamily.

It is found in the mitochondrion matrix. It carries out the reaction tRNA(Asp) + L-aspartate + ATP = L-aspartyl-tRNA(Asp) + AMP + diphosphate. The protein is Aspartate--tRNA ligase, mitochondrial (maspS) of Dictyostelium discoideum (Social amoeba).